Here is a 183-residue protein sequence, read N- to C-terminus: Ribosome maturation factor RimM (183 aa).

The 82-residue stretch at 102–183 folds into the PRC barrel domain; it reads DDDFYWHQLE…CITVDWDPEF (82 aa).

Belongs to the RimM family. As to quaternary structure, binds ribosomal protein uS19.

It localises to the cytoplasm. In terms of biological role, an accessory protein needed during the final step in the assembly of 30S ribosomal subunit, possibly for assembly of the head region. Essential for efficient processing of 16S rRNA. May be needed both before and after RbfA during the maturation of 16S rRNA. It has affinity for free ribosomal 30S subunits but not for 70S ribosomes. This chain is Ribosome maturation factor RimM, found in Saccharophagus degradans (strain 2-40 / ATCC 43961 / DSM 17024).